A 384-amino-acid polypeptide reads, in one-letter code: Large ribosomal subunit protein uL3m (384 aa).

2 disordered regions span residues 80–101 and 237–262; these read NQVT…KRRE and QEAS…SGSR. Polar residues predominate over residues 240-249; that stretch reads SHGNSLNHRT.

The protein belongs to the universal ribosomal protein uL3 family. As to quaternary structure, component of the mitochondrial large ribosomal subunit (mt-LSU). Mature N.crassa 74S mitochondrial ribosomes consist of a small (37S) and a large (54S) subunit. The 37S small subunit contains a 16S ribosomal RNA (16S mt-rRNA) and 32 different proteins. The 54S large subunit contains a 23S rRNA (23S mt-rRNA) and 42 different proteins.

The protein localises to the mitochondrion. Functionally, component of the mitochondrial ribosome (mitoribosome), a dedicated translation machinery responsible for the synthesis of mitochondrial genome-encoded proteins, including at least some of the essential transmembrane subunits of the mitochondrial respiratory chain. The mitoribosomes are attached to the mitochondrial inner membrane and translation products are cotranslationally integrated into the membrane. The polypeptide is Large ribosomal subunit protein uL3m (mrpl9) (Neurospora crassa (strain ATCC 24698 / 74-OR23-1A / CBS 708.71 / DSM 1257 / FGSC 987)).